The sequence spans 80 residues: RNA-binding protein Hfq (80 aa).

One can recognise a Sm domain in the interval 7–67 (ESFLNTARKK…ITTIVPHERL (61 aa)).

Belongs to the Hfq family. In terms of assembly, homohexamer.

Functionally, RNA chaperone that binds small regulatory RNA (sRNAs) and mRNAs to facilitate mRNA translational regulation in response to envelope stress, environmental stress and changes in metabolite concentrations. Also binds with high specificity to tRNAs. This Aquifex aeolicus (strain VF5) protein is RNA-binding protein Hfq.